The sequence spans 258 residues: Transcription factor TT2 (258 aa).

2 HTH myb-type domains span residues 11–63 and 64–118; these read REEL…KNYL and RPGI…RKRL. DNA-binding regions (H-T-H motif) lie at residues 39–63 and 91–114; these read WSTL…KNYL and WSLI…NSNL. Residue 47–54 coordinates ATP; that stretch reads GLKRCGKS.

As to quaternary structure, interacts with BHLH2/EGL3/MYC146, BHLH12/MYC1 and BHLH42/TT8. As to expression, expressed at a high level in immature siliques and at a lower level in flowers. Undetected in young seedlings, roots, leaves and inflorescence stems.

Its subcellular location is the nucleus. Functionally, transcription activator, when associated with BHLH2/EGL3/MYC146, BHLH12/MYC1, or BHLH42/TT8. Involved in the control of flavonoid late metabolism in developing siliques. Plays a key role in determining the tissue-specific activation of leucoanthocyanidin reductase (BANYULS). This is Transcription factor TT2 (TT2) from Arabidopsis thaliana (Mouse-ear cress).